A 325-amino-acid polypeptide reads, in one-letter code: Succinylglutamate desuccinylase (325 aa).

Residues His-51, Glu-54, and His-148 each coordinate Zn(2+). Glu-211 is a catalytic residue.

The protein belongs to the AspA/AstE family. Succinylglutamate desuccinylase subfamily. Zn(2+) serves as cofactor.

It carries out the reaction N-succinyl-L-glutamate + H2O = L-glutamate + succinate. The protein operates within amino-acid degradation; L-arginine degradation via AST pathway; L-glutamate and succinate from L-arginine: step 5/5. Its function is as follows. Transforms N(2)-succinylglutamate into succinate and glutamate. This chain is Succinylglutamate desuccinylase, found in Photorhabdus laumondii subsp. laumondii (strain DSM 15139 / CIP 105565 / TT01) (Photorhabdus luminescens subsp. laumondii).